We begin with the raw amino-acid sequence, 2595 residues long: Glucosylceramide transporter ABCA12 (2595 aa).

A helical transmembrane segment spans residues 23 to 43; it reads PLWTLVLILWPVIIFIILAIT. A compositionally biased stretch (basic and acidic residues) spans 109-119; that stretch reads LKKPSNPKRDS. Residues 109–143 form a disordered region; sequence LKKPSNPKRDSNLSLRSTQVPERSHTSLATVPPRP. 23 N-linked (GlcNAc...) asparagine glycosylation sites follow: asparagine 120, asparagine 156, asparagine 174, asparagine 214, asparagine 275, asparagine 331, asparagine 365, asparagine 381, asparagine 410, asparagine 433, asparagine 455, asparagine 526, asparagine 541, asparagine 574, asparagine 605, asparagine 645, asparagine 749, asparagine 773, asparagine 812, asparagine 823, asparagine 854, asparagine 917, and asparagine 960. Over residues 120-137 the composition is skewed to polar residues; sequence NLSLRSTQVPERSHTSLA. The next 3 helical transmembrane spans lie at 1062 to 1082, 1109 to 1129, and 1142 to 1162; these read VSYS…AAFV, FAWL…LIVI, and FILF…SYLI. N-linked (GlcNAc...) asparagine glycosylation occurs at asparagine 1167. Helical transmembrane passes span 1171 to 1191, 1197 to 1217, and 1247 to 1267; these read IAAL…IVLV, LSYV…SYAS, and FGWL…IAWY. The N-linked (GlcNAc...) asparagine glycan is linked to asparagine 1319. The ABC transporter 1 domain occupies 1346–1577; the sequence is VALHGVTKIY…FGDGYHLTLT (232 aa). Residue 1378–1385 coordinates ATP; sequence GPNGAGKT. N-linked (GlcNAc...) asparagine glycosylation is found at asparagine 1524, asparagine 1663, asparagine 1673, asparagine 1686, asparagine 1690, and asparagine 1704. Positions 1672-1703 are disordered; that stretch reads SNMSLEHLTQRKVGNPSANGTSTPDDLSVSSS. Over residues 1687 to 1703 the composition is skewed to polar residues; it reads PSANGTSTPDDLSVSSS. The helical transmembrane segment at 1747-1767 threads the bilayer; that stretch reads LIAQVILPIVFVATAMGLGTL. N-linked (GlcNAc...) asparagine glycosylation is found at asparagine 1819, asparagine 1835, asparagine 1876, asparagine 1921, and asparagine 1952. 7 consecutive transmembrane segments (helical) span residues 1979–1999, 2035–2055, 2072–2092, 2103–2123, 2143–2163, 2187–2207, and 2270–2290; these read ATIS…GYSV, FIYD…VIAI, LLLL…AGLF, VCVN…VYFL, IFLI…SQQQ, GAMF…RLLI, and IIAV…GLLG. The ABC transporter 2 domain occupies 2254 to 2489; that stretch reads VQLHRLTKTY…FGRGFTVKVH (236 aa). 2290–2297 provides a ligand contact to ATP; it reads GVNGAGKT. Asparagine 2318, asparagine 2542, and asparagine 2547 each carry an N-linked (GlcNAc...) asparagine glycan. A compositionally biased stretch (polar residues) spans 2575–2587; it reads VDTSSQGSTISVD. The segment at 2575 to 2595 is disordered; it reads VDTSSQGSTISVDSQEDQLDS.

The protein belongs to the ABC transporter superfamily. ABCA family. As to quaternary structure, interacts with NR1H2 and ABCA1; this interaction is required for ABCA1 localization to the cell surface and is necessary for its normal activity and stability. In terms of tissue distribution, expressed in a number of other tissues besides skin, including heart, intestine, stomach, and kidney. Expressed mainly in the granular layer of the skin. Expressed in lung. Expressed in alpha and beta cells of pancreatic islets.

It localises to the cytoplasmic vesicle. It is found in the secretory vesicle membrane. The protein resides in the golgi apparatus membrane. It carries out the reaction ATP + H2O + phospholipidSide 1 = ADP + phosphate + phospholipidSide 2.. It catalyses the reaction a beta-D-glucosylceramide(in) + ATP + H2O = a beta-D-glucosylceramide(out) + ADP + phosphate + H(+). Functionally, transports lipids such as glucosylceramides from the outer to the inner leaflet of lamellar granules (LGs) membrane, whereby the lipids are finally transported to the keratinocyte periphery via the trans-Golgi network and LGs and released to the apical surface of the granular keratinocytes to form lipid lamellae in the stratum corneum of the epidermis, which is essential for skin barrier function. In the meantime, participates in the transport of the lamellar granules-associated proteolytic enzymes, in turn regulates desquamation and keratinocyte differentiation. Furthermore, is essential for the regulation of cellular cholesterol homeostasis by regulating ABCA1-dependent cholesterol efflux from macrophages through interaction with NR1H2 and ABCA1. Plays pleiotropic roles in regulating glucose stimulated insulin secretion from beta cells, regulating the morphology and fusion of insulin granules, lipid raft abundance and the actin cytoskeleton. Also involved in lung surfactant biogenesis. The sequence is that of Glucosylceramide transporter ABCA12 from Mus musculus (Mouse).